The sequence spans 357 residues: Tetraacyldisaccharide 4'-kinase (357 aa).

54–61 (TVGGAGKT) is an ATP binding site.

It belongs to the LpxK family.

It catalyses the reaction a lipid A disaccharide + ATP = a lipid IVA + ADP + H(+). Its pathway is glycolipid biosynthesis; lipid IV(A) biosynthesis; lipid IV(A) from (3R)-3-hydroxytetradecanoyl-[acyl-carrier-protein] and UDP-N-acetyl-alpha-D-glucosamine: step 6/6. In terms of biological role, transfers the gamma-phosphate of ATP to the 4'-position of a tetraacyldisaccharide 1-phosphate intermediate (termed DS-1-P) to form tetraacyldisaccharide 1,4'-bis-phosphate (lipid IVA). In Rhizobium leguminosarum bv. trifolii (strain WSM2304), this protein is Tetraacyldisaccharide 4'-kinase.